The sequence spans 248 residues: Protein maestro (248 aa).

The disordered stretch occupies residues 1–23; sequence MEQTRKIPNQPLPTPTSQSKKRR. The HEAT repeat unit spans residues 128-163; the sequence is SFFIDITLQARTLLDDEDDSVRYSAFVLFGQLASFA.

Prominent expression seen in testis, brain, liver and heart. Weakly expressed in the kidney.

It is found in the nucleus. The protein localises to the nucleolus. This is Protein maestro (Mro) from Mus musculus (Mouse).